The primary structure comprises 804 residues: Leucine--tRNA ligase (804 aa).

The 'HIGH' region signature appears at 40–51 (PYPSGQGLHVGH). A 'KMSKS' region motif is present at residues 576–580 (KMSKS). K579 lines the ATP pocket.

It belongs to the class-I aminoacyl-tRNA synthetase family.

It is found in the cytoplasm. The catalysed reaction is tRNA(Leu) + L-leucine + ATP = L-leucyl-tRNA(Leu) + AMP + diphosphate. This is Leucine--tRNA ligase from Enterococcus faecalis (strain ATCC 700802 / V583).